The following is a 503-amino-acid chain: Transcription termination/antitermination protein NusA (503 aa).

Residues 139 to 203 (GEIINGIVKR…KGPQIFLSRV (65 aa)) enclose the S1 motif domain. The KH domain maps to 308–378 (RHKVEVVVSQ…LDVEEVIGQL (71 aa)).

This sequence belongs to the NusA family. As to quaternary structure, monomer. Binds directly to the core enzyme of the DNA-dependent RNA polymerase and to nascent RNA.

The protein resides in the cytoplasm. Functionally, participates in both transcription termination and antitermination. The protein is Transcription termination/antitermination protein NusA of Rickettsia conorii (strain ATCC VR-613 / Malish 7).